Here is a 400-residue protein sequence, read N- to C-terminus: MAKAKYERTKPHVNIGTIGHVDHGKTTLTAAITVVLSTSGGASVKRYDEIDNAPEERERGITINTAHVEYETANRHYAHVDCPGHADYVKNMITGAAQMDGAILVVSAADGPMPQTREHILLSRQVGVPYIVVFLNKSDMVDDEELLELVDMEVRELLNSYEFPGDDTPIVAGSGLKALECGCGKRECEWCGKIWELMDNVDAYIPTPERAVDKPFLMPVEDVFSITGRGTVATGRVERGQVKVQDEVEIVGLNEKPRKTVVTGVEMFRKLLDFAQAGDNIGALLRGVDRKEIERGQVLAKPGSINPHTKYSAEVYVLTKEEGGRHTPFFNGYRPQFYFRTTDVTGIVQLPEGVEMVMPGDNIKVDVDLITPIAIEEGLRFAIREGGRTVGAGVVTGIRE.

A tr-type G domain is found at 10-209 (KPHVNIGTIG…NVDAYIPTPE (200 aa)). The interval 19–26 (GHVDHGKT) is G1. 19 to 26 (GHVDHGKT) is a GTP binding site. Position 26 (Thr26) interacts with Mg(2+). Positions 60-64 (GITIN) are G2. Residues 81-84 (DCPG) form a G3 region. GTP-binding positions include 81 to 85 (DCPGH) and 136 to 139 (NKSD). The segment at 136-139 (NKSD) is G4. The G5 stretch occupies residues 174–176 (SGL).

Belongs to the TRAFAC class translation factor GTPase superfamily. Classic translation factor GTPase family. EF-Tu/EF-1A subfamily. Monomer.

Its subcellular location is the cytoplasm. The enzyme catalyses GTP + H2O = GDP + phosphate + H(+). Its function is as follows. GTP hydrolase that promotes the GTP-dependent binding of aminoacyl-tRNA to the A-site of ribosomes during protein biosynthesis. The polypeptide is Elongation factor Tu (Desulforamulus reducens (strain ATCC BAA-1160 / DSM 100696 / MI-1) (Desulfotomaculum reducens)).